The following is a 209-amino-acid chain: Kynurenine formamidase (209 aa).

W20 contacts substrate. Zn(2+) contacts are provided by H50, H54, and D56. H60 (proton donor/acceptor) is an active-site residue. Zn(2+) contacts are provided by H161 and E173.

It belongs to the Cyclase 1 superfamily. KynB family. Homodimer. It depends on Zn(2+) as a cofactor.

It carries out the reaction N-formyl-L-kynurenine + H2O = L-kynurenine + formate + H(+). It functions in the pathway amino-acid degradation; L-tryptophan degradation via kynurenine pathway; L-kynurenine from L-tryptophan: step 2/2. Its function is as follows. Catalyzes the hydrolysis of N-formyl-L-kynurenine to L-kynurenine, the second step in the kynurenine pathway of tryptophan degradation. This Bacillus thuringiensis (strain Al Hakam) protein is Kynurenine formamidase.